The chain runs to 509 residues: Proto-oncogene tyrosine-protein kinase LCK (509 aa).

Glycine 2 is lipidated: N-myristoyl glycine. Residues glycine 2–tyrosine 72 form an interactions with CD4 and CD8 region. S-palmitoyl cysteine attachment occurs at residues cysteine 3 and cysteine 5. The region spanning leucine 61–serine 121 is the SH3 domain. A Glycyl lysine isopeptide (Lys-Gly) (interchain with G-Cter in ubiquitin) cross-link involves residue lysine 99. A Phosphoserine modification is found at serine 102. Positions tryptophan 127–cysteine 224 constitute an SH2 domain. The interval arginine 154–arginine 242 is interaction with PTPRH. A Phosphothreonine modification is found at threonine 159. At serine 162 the chain carries Phosphoserine. A Phosphotyrosine modification is found at tyrosine 192. Serine 194 carries the phosphoserine modification. A Protein kinase domain is found at leucine 245–phenylalanine 498. ATP-binding positions include leucine 251–valine 259 and lysine 273. A Glycyl lysine isopeptide (Lys-Gly) (interchain with G-Cter in ubiquitin) cross-link involves residue lysine 276. Aspartate 364 (proton acceptor) is an active-site residue. A Phosphotyrosine; by autocatalysis modification is found at tyrosine 394. Tyrosine 505 bears the Phosphotyrosine mark.

The protein belongs to the protein kinase superfamily. Tyr protein kinase family. SRC subfamily. Binds to the cytoplasmic domain of cell surface receptors, such as AXL, CD2, CD4, CD5, CD8, CD44, CD45 and CD122. Also binds to effector molecules, such as PI4K, VAV1, RASA1, FYB1 and to other protein kinases including CDK1, RAF1, ZAP70 and SYK. Binds to phosphatidylinositol 3'-kinase (PI3K) from T-lymphocytes through its SH3 domain and to the tyrosine phosphorylated form of KHDRBS1/p70 through its SH2 domain. Interacts with SQSTM1. Interacts with phosphorylated LIME1. Interacts with CBLB and PTPRH. Interacts with RUNX3. Forms a signaling complex with EPHA1, PTK2B and PI3-KINASE; upon activation by EFNA1 which may regulate T-lymphocytes migration. Associates with ZAP70 and RHOH; these interactions allow LCK-mediated RHOH and CD3 subunit phosphorylations in presence of a functional ZAP70. Interacts with CEACAM1 (via cytoplasmic domain); mediates CEACAM1 phosphorylation resulting in PTPN6 recruitment that dephosphorylates TCR stimulation-induced CD247 and ZAP70. Interacts with FYB2. Interacts with CD160. Interacts with CD48. Autophosphorylated on Tyr-394, increasing enzymatic activity, this site is dephosphorylated by PTN22. Phosphorylated on Tyr-505 by CSK, decreasing activity. Dephosphorylated by PTPRC/CD45. Dephosphorylation at Tyr-394 by PTPN2 negatively regulates T-cells differentiation. Dephosphorylation at Tyr-394 by DUSP22 negatively regulates T-cell receptor signaling. Post-translationally, myristoylation is required prior to palmitoylation. In terms of processing, palmitoylation regulates association with the plasma membrane and could be mediated by ZDHHC2. 'Lys-63'-linked ubiquitinated at Lys-99 and Lys-276 by UBR2; this modification is required for autophosphorylation at Tyr-394.

The protein resides in the cell membrane. It localises to the cytoplasm. Its subcellular location is the cytosol. The enzyme catalyses L-tyrosyl-[protein] + ATP = O-phospho-L-tyrosyl-[protein] + ADP + H(+). Its activity is regulated as follows. The relative activities of the inhibitory tyrosine-protein kinase CSK and the activating tyrosine-protein phosphatase PTPRC/CD45 determine the level of LCK activity. These interactions allow rapid and efficient activation of LCK in response to TCR stimulation. Its function is as follows. Non-receptor tyrosine-protein kinase that plays an essential role in the selection and maturation of developing T-cells in the thymus and in the function of mature T-cells. Plays a key role in T-cell antigen receptor (TCR)-linked signal transduction pathways. Constitutively associated with the cytoplasmic portions of the CD4 and CD8 surface receptors. Association of the TCR with a peptide antigen-bound MHC complex facilitates the interaction of CD4 and CD8 with MHC class II and class I molecules, respectively, thereby recruiting the associated LCK protein to the vicinity of the TCR/CD3 complex. LCK then phosphorylates tyrosine residues within the immunoreceptor tyrosine-based activation motifs (ITAM) of the cytoplasmic tails of the TCR-gamma chains and CD3 subunits, initiating the TCR/CD3 signaling pathway. Once stimulated, the TCR recruits the tyrosine kinase ZAP70, that becomes phosphorylated and activated by LCK. Following this, a large number of signaling molecules are recruited, ultimately leading to lymphokine production. LCK also contributes to signaling by other receptor molecules. Associates directly with the cytoplasmic tail of CD2, which leads to hyperphosphorylation and activation of LCK. Also plays a role in the IL2 receptor-linked signaling pathway that controls the T-cell proliferative response. Binding of IL2 to its receptor results in increased activity of LCK. Is expressed at all stages of thymocyte development and is required for the regulation of maturation events that are governed by both pre-TCR and mature alpha beta TCR. Phosphorylates other substrates including RUNX3, PTK2B/PYK2, the microtubule-associated protein MAPT, RHOH or TYROBP. Interacts with UNC119; this interaction plays a crucial role in activation of LCK. The sequence is that of Proto-oncogene tyrosine-protein kinase LCK (Lck) from Rattus norvegicus (Rat).